Consider the following 152-residue polypeptide: Cytochrome c-type biogenesis protein CcmE (152 aa).

The Cytoplasmic portion of the chain corresponds to 1–8 (MQARRKTR). The chain crosses the membrane as a helical; Signal-anchor for type II membrane protein span at residues 9–29 (LYIVLAVLAGLGLTVSLTLYA). The Periplasmic segment spans residues 30–152 (LSSNIDLFYT…MTPEKTGAQP (123 aa)). Residues His-130 and Tyr-134 each contribute to the heme site. The tract at residues 133-152 (NYTPPEVKNAMTPEKTGAQP) is disordered.

The protein belongs to the CcmE/CycJ family.

The protein resides in the cell inner membrane. Functionally, heme chaperone required for the biogenesis of c-type cytochromes. Transiently binds heme delivered by CcmC and transfers the heme to apo-cytochromes in a process facilitated by CcmF and CcmH. The sequence is that of Cytochrome c-type biogenesis protein CcmE from Klebsiella pneumoniae (strain 342).